The chain runs to 317 residues: Sulfate adenylyltransferase subunit 2 (317 aa).

2 disordered regions span residues 1–22 (MPDS…PLDP) and 298–317 (RAID…EGYF).

This sequence belongs to the PAPS reductase family. CysD subfamily. As to quaternary structure, heterodimer composed of CysD, the smaller subunit, and CysN.

The enzyme catalyses sulfate + ATP + H(+) = adenosine 5'-phosphosulfate + diphosphate. It functions in the pathway sulfur metabolism; hydrogen sulfide biosynthesis; sulfite from sulfate: step 1/3. Functionally, with CysN forms the ATP sulfurylase (ATPS) that catalyzes the adenylation of sulfate producing adenosine 5'-phosphosulfate (APS) and diphosphate, the first enzymatic step in sulfur assimilation pathway. APS synthesis involves the formation of a high-energy phosphoric-sulfuric acid anhydride bond driven by GTP hydrolysis by CysN coupled to ATP hydrolysis by CysD. This Rhizobium tropici protein is Sulfate adenylyltransferase subunit 2 (cysD).